The primary structure comprises 465 residues: ATP-dependent protease ATPase subunit HslU (465 aa).

ATP is bound by residues Val-20, 62-67 (GVGKTE), Asp-277, Glu-343, and Arg-415.

Belongs to the ClpX chaperone family. HslU subfamily. As to quaternary structure, a double ring-shaped homohexamer of HslV is capped on each side by a ring-shaped HslU homohexamer. The assembly of the HslU/HslV complex is dependent on binding of ATP.

Its subcellular location is the cytoplasm. ATPase subunit of a proteasome-like degradation complex; this subunit has chaperone activity. The binding of ATP and its subsequent hydrolysis by HslU are essential for unfolding of protein substrates subsequently hydrolyzed by HslV. HslU recognizes the N-terminal part of its protein substrates and unfolds these before they are guided to HslV for hydrolysis. In Geobacillus kaustophilus (strain HTA426), this protein is ATP-dependent protease ATPase subunit HslU.